The primary structure comprises 622 residues: WD repeat-containing protein 70 (622 aa).

Residues 36-55 (RTAVERSKQTLEAREKEEQL) show a composition bias toward basic and acidic residues. The segment at 36–141 (RTAVERSKQT…DNPVKDIPDS (106 aa)) is disordered. Residues 67–84 (SSSGQKKTKASGSSSGSE) show a composition bias toward low complexity. Over residues 120–132 (SDDEDDEEHEDDD) the composition is skewed to acidic residues. WD repeat units lie at residues 148-187 (HGTK…ASLQ), 195-236 (CECH…ECVK), 249-289 (GHTA…KHKG), 298-337 (GKPV…HTKF), 344-383 (TPGT…NPLN), 387-434 (GLEN…KIYE), and 437-476 (VTEA…QRGA). Residues 508–533 (REPRQRSTRKQLEKDRLDPVKSHKPE) are compositionally biased toward basic and acidic residues. Disordered stretches follow at residues 508 to 549 (REPR…GTHG) and 602 to 622 (AEVD…KRKI). Positions 539-549 (PGRGGRVGTHG) are enriched in gly residues. Residues 604-614 (VDSDEEEPDNE) show a composition bias toward acidic residues.

It belongs to the WD repeat GAD-1 family.

This chain is WD repeat-containing protein 70 (wdr70), found in Xenopus laevis (African clawed frog).